The sequence spans 763 residues: Elongation factor G, mitochondrial (763 aa).

Residues methionine 1 to alanine 52 constitute a mitochondrion transit peptide. The tr-type G domain maps to serine 60 to serine 347. GTP contacts are provided by residues alanine 69–threonine 76, aspartate 145–histidine 149, and asparagine 199–aspartate 202.

Belongs to the TRAFAC class translation factor GTPase superfamily. Classic translation factor GTPase family. EF-G/EF-2 subfamily.

The protein localises to the mitochondrion. It functions in the pathway protein biosynthesis; polypeptide chain elongation. Mitochondrial GTPase that catalyzes the GTP-dependent ribosomal translocation step during translation elongation. During this step, the ribosome changes from the pre-translocational (PRE) to the post-translocational (POST) state as the newly formed A-site-bound peptidyl-tRNA and P-site-bound deacylated tRNA move to the P and E sites, respectively. Catalyzes the coordinated movement of the two tRNA molecules, the mRNA and conformational changes in the ribosome. In Schizosaccharomyces japonicus (strain yFS275 / FY16936) (Fission yeast), this protein is Elongation factor G, mitochondrial (mef1).